Reading from the N-terminus, the 99-residue chain is Aspartyl/glutamyl-tRNA(Asn/Gln) amidotransferase subunit C (99 aa).

It belongs to the GatC family. Heterotrimer of A, B and C subunits.

The catalysed reaction is L-glutamyl-tRNA(Gln) + L-glutamine + ATP + H2O = L-glutaminyl-tRNA(Gln) + L-glutamate + ADP + phosphate + H(+). It carries out the reaction L-aspartyl-tRNA(Asn) + L-glutamine + ATP + H2O = L-asparaginyl-tRNA(Asn) + L-glutamate + ADP + phosphate + 2 H(+). Functionally, allows the formation of correctly charged Asn-tRNA(Asn) or Gln-tRNA(Gln) through the transamidation of misacylated Asp-tRNA(Asn) or Glu-tRNA(Gln) in organisms which lack either or both of asparaginyl-tRNA or glutaminyl-tRNA synthetases. The reaction takes place in the presence of glutamine and ATP through an activated phospho-Asp-tRNA(Asn) or phospho-Glu-tRNA(Gln). The chain is Aspartyl/glutamyl-tRNA(Asn/Gln) amidotransferase subunit C from Polaromonas naphthalenivorans (strain CJ2).